The following is a 77-amino-acid chain: Sec-independent protein translocase protein TatA (77 aa).

Residues 1–21 (MGGLSIWHWLIVLLIVALVFG) form a helical membrane-spanning segment. The segment at 43 to 77 (MKESEAPADAQQLPRSGSVNVDAKDAARSSDSNKA) is disordered. Residues 64 to 77 (DAKDAARSSDSNKA) show a composition bias toward basic and acidic residues.

It belongs to the TatA/E family. In terms of assembly, the Tat system comprises two distinct complexes: a TatABC complex, containing multiple copies of TatA, TatB and TatC subunits, and a separate TatA complex, containing only TatA subunits. Substrates initially bind to the TatABC complex, which probably triggers association of the separate TatA complex to form the active translocon.

The protein resides in the cell inner membrane. Part of the twin-arginine translocation (Tat) system that transports large folded proteins containing a characteristic twin-arginine motif in their signal peptide across membranes. TatA could form the protein-conducting channel of the Tat system. This is Sec-independent protein translocase protein TatA from Burkholderia mallei (strain NCTC 10247).